A 121-amino-acid polypeptide reads, in one-letter code: Putative ankyrin repeat protein L215 (121 aa).

2 ANK repeats span residues 10–40 (QYDS…SFKE) and 42–71 (IHET…NKLV).

This is Putative ankyrin repeat protein L215 from Acanthamoeba polyphaga mimivirus (APMV).